The sequence spans 263 residues: 4-hydroxy-2-oxo-heptane-1,7-dioate aldolase (263 aa).

H45 acts as the Proton acceptor in catalysis. Q147 serves as a coordination point for substrate. A divalent metal cation is bound at residue E149. Positions 174 and 175 each coordinate substrate. D175 is a binding site for a divalent metal cation.

This sequence belongs to the HpcH/HpaI aldolase family. Homohexamer; trimer of dimers. It depends on a divalent metal cation as a cofactor.

The enzyme catalyses 4-hydroxy-2-oxoheptanedioate = succinate semialdehyde + pyruvate. The protein operates within aromatic compound metabolism; 4-hydroxyphenylacetate degradation; pyruvate and succinate semialdehyde from 4-hydroxyphenylacetate: step 7/7. In terms of biological role, catalyzes the reversible retro-aldol cleavage of 4-hydroxy-2-ketoheptane-1,7-dioate (HKHD) to pyruvate and succinic semialdehyde. In Salmonella newport (strain SL254), this protein is 4-hydroxy-2-oxo-heptane-1,7-dioate aldolase.